We begin with the raw amino-acid sequence, 100 residues long: Putative pterin-4-alpha-carbinolamine dehydratase 2 (100 aa).

The protein belongs to the pterin-4-alpha-carbinolamine dehydratase family.

It carries out the reaction (4aS,6R)-4a-hydroxy-L-erythro-5,6,7,8-tetrahydrobiopterin = (6R)-L-erythro-6,7-dihydrobiopterin + H2O. In Cupriavidus pinatubonensis (strain JMP 134 / LMG 1197) (Cupriavidus necator (strain JMP 134)), this protein is Putative pterin-4-alpha-carbinolamine dehydratase 2.